Here is a 359-residue protein sequence, read N- to C-terminus: F-box protein At5g49610 (359 aa).

Residues 3–52 (NQKGALFPDEVILQILARLPVKSLFRFKSVCKSWYRLPSDKYFTSLFNQL) enclose the F-box domain.

In terms of assembly, part of a SCF (SKP1-cullin-F-box) protein ligase complex. Interacts with SKP1A, SKP1B, ASK11, ASK12, ASK13 and ASK14.

It functions in the pathway protein modification; protein ubiquitination. This Arabidopsis thaliana (Mouse-ear cress) protein is F-box protein At5g49610.